The following is an 865-amino-acid chain: High affinity cAMP-specific and IBMX-insensitive 3',5'-cyclic phosphodiesterase 8B (865 aa).

2 disordered regions span residues 17–40 (CRDS…TAPL) and 52–92 (AMPP…TCRG). Over residues 23–36 (SNSPRQTSSVSQGP) the composition is skewed to polar residues. Positions 75-90 (GSGSSTGSSGPATTTC) are enriched in low complexity. In terms of domain architecture, PAS spans 247–318 (ACNSVFTALD…DTINTCIKKG (72 aa)). The tract at residues 373–415 (IHRDSGDNSQTEPHSFRHKSRRKESIDVKSISSRGSDAPSLQN) is disordered. The segment covering 402–415 (SISSRGSDAPSLQN) has biased composition (polar residues). At serine 497 the chain carries Phosphoserine. A PDEase domain is found at 519–855 (TINDVPPSIA…KHWKTLDDLK (337 aa)). Histidine 595 functions as the Proton donor in the catalytic mechanism. 3 residues coordinate a divalent metal cation: histidine 599, histidine 635, and aspartate 636. Serine 731 and serine 734 each carry phosphoserine. Aspartate 761 is a binding site for a divalent metal cation.

It belongs to the cyclic nucleotide phosphodiesterase family. PDE8 subfamily. Requires a divalent metal cation as cofactor. In terms of tissue distribution, widely expressed.

It catalyses the reaction 3',5'-cyclic AMP + H2O = AMP + H(+). It participates in purine metabolism; 3',5'-cyclic AMP degradation; AMP from 3',5'-cyclic AMP: step 1/1. In terms of biological role, hydrolyzes the second messenger cAMP, which is a key regulator of many important physiological processes. May be involved in specific signaling in the thyroid gland. This Mus musculus (Mouse) protein is High affinity cAMP-specific and IBMX-insensitive 3',5'-cyclic phosphodiesterase 8B (Pde8b).